We begin with the raw amino-acid sequence, 338 residues long: Ketol-acid reductoisomerase (NADP(+)) (338 aa).

A KARI N-terminal Rossmann domain is found at 2-182 (TKMYYEKDTD…GGARAGVLET (181 aa)). NADP(+) contacts are provided by residues 25–28 (YGSQ), Ser51, Ser53, and 83–86 (DELQ). His108 is a catalytic residue. Residue Gly134 participates in NADP(+) binding. The region spanning 183 to 330 (TFRTETETDL…SEIRKLYCWN (148 aa)) is the KARI C-terminal knotted domain. Mg(2+) contacts are provided by Asp191, Glu195, Glu227, and Glu231. Position 252 (Ser252) interacts with substrate.

Belongs to the ketol-acid reductoisomerase family. Mg(2+) serves as cofactor.

It catalyses the reaction (2R)-2,3-dihydroxy-3-methylbutanoate + NADP(+) = (2S)-2-acetolactate + NADPH + H(+). The catalysed reaction is (2R,3R)-2,3-dihydroxy-3-methylpentanoate + NADP(+) = (S)-2-ethyl-2-hydroxy-3-oxobutanoate + NADPH + H(+). Its pathway is amino-acid biosynthesis; L-isoleucine biosynthesis; L-isoleucine from 2-oxobutanoate: step 2/4. It functions in the pathway amino-acid biosynthesis; L-valine biosynthesis; L-valine from pyruvate: step 2/4. In terms of biological role, involved in the biosynthesis of branched-chain amino acids (BCAA). Catalyzes an alkyl-migration followed by a ketol-acid reduction of (S)-2-acetolactate (S2AL) to yield (R)-2,3-dihydroxy-isovalerate. In the isomerase reaction, S2AL is rearranged via a Mg-dependent methyl migration to produce 3-hydroxy-3-methyl-2-ketobutyrate (HMKB). In the reductase reaction, this 2-ketoacid undergoes a metal-dependent reduction by NADPH to yield (R)-2,3-dihydroxy-isovalerate. This Clostridium botulinum (strain Alaska E43 / Type E3) protein is Ketol-acid reductoisomerase (NADP(+)).